Reading from the N-terminus, the 305-residue chain is Dioxygenase hkm4 (305 aa).

Fe cation is bound by residues histidine 140, aspartate 142, and histidine 216.

It belongs to the PhyH family. Fe cation is required as a cofactor.

It participates in secondary metabolite biosynthesis. Dioxygenase; part of the gene cluster that mediates the biosynthesis of hancockiamides, an unusual new family of N-cinnamoylated piperazines. The NRPS hkm10 and the NmrA-like reductase hkm9 are proposed to convert two molecules of L-Phe to the intermediary piperazine called xenocockiamide A. Xenocockiamide A is then converted to hancockiamide D via a series of hydroxylations and O-methylations. The tyrosinase hkm6 may catalyze an aromatic hydroxylation, then the 2-oxoglutarate-dependent Fe(II) dioxygenase hkm4 and the FAD-dependent phenol hydroxylase hkm7 may catalyze consecutive hydroxylations to install 2 more hydroxy groups, and the methyltransferase hkm8 probably catalyzes two methylations using 2 molecules of S-adenosyl-L-methionine (SAM). The NRPS hkm11 activates and transfers trans-cinnamate supplied by the PAL hkm12 to hancockiamide D and produces hancockiamide A. NRPS Hkm11 has the flexibility to tolerate the bulky hancockiamide G as a substrate and the absence of the acetyl-transferase hkm3 opens up the opportunity for hkm11 to introduce a second N-cinnamoyl moiety. The cytochrome P450 monooxygenase hkm5 catalyzes the methylenedioxy bridge formation, converting hancockiamide A into hancockiamide G. Hkm5 can also convert hancockiamide B into hancockiamide C, and hancockiamide D into hancockiamide H. The N-acetyltransferase hkm3 finally transfers an acetyl group to 1-N of piperazine, converting hancockiamide A into hancockiamide B and hancockiamide G into hancockiamide C. This Aspergillus hancockii protein is Dioxygenase hkm4.